Consider the following 336-residue polypeptide: Casein kinase II subunit alpha (336 aa).

In terms of domain architecture, Protein kinase spans 37 to 322 (YQLVRKLGRG…AREAMAHPYF (286 aa)). ATP is bound by residues 43 to 51 (LGRGKYSEV) and K66. The active-site Proton acceptor is the D154.

This sequence belongs to the protein kinase superfamily. Ser/Thr protein kinase family. CK2 subfamily. In terms of assembly, tetramer of two alpha and two beta chains. Requires Mg(2+) as cofactor.

Its subcellular location is the nucleus. It is found in the nucleolus. It catalyses the reaction L-seryl-[protein] + ATP = O-phospho-L-seryl-[protein] + ADP + H(+). The catalysed reaction is L-threonyl-[protein] + ATP = O-phospho-L-threonyl-[protein] + ADP + H(+). Casein kinases are operationally defined by their preferential utilization of acidic proteins such as caseins as substrates. The alpha chain contains the catalytic site. May participate in Wnt signaling. This is Casein kinase II subunit alpha (CkIIalpha) from Drosophila melanogaster (Fruit fly).